We begin with the raw amino-acid sequence, 59 residues long: uncharacterized protein (59 aa).

The signal sequence occupies residues Met1–Ala17.

This is an uncharacterized protein from Rickettsia prowazekii (strain Madrid E).